The sequence spans 970 residues: Protein bicaudal C homolog 1-B (970 aa).

The interval 1–50 (MAAQCGGYMNQSDPGSNSERSADSPLPGSEDDSPGSAAPHDPEWREERFR) is disordered. The span at 9–19 (MNQSDPGSNSE) shows a compositional bias: polar residues. Residues 40-50 (HDPEWREERFR) show a composition bias toward basic and acidic residues. KH domains follow at residues 130–197 (RVTL…RVRI) and 282–346 (PVST…RQYL). The segment covering 596–605 (EASRQSNNHS) has biased composition (polar residues). Disordered regions lie at residues 596–638 (EASR…SANT), 677–696 (SDSE…APGS), and 773–841 (RRAN…NKSA). Residues 606-616 (SAEEVNSKTDS) show a composition bias toward basic and acidic residues. 2 stretches are compositionally biased toward polar residues: residues 783 to 810 (TMST…GSDS) and 819 to 831 (IDSS…SSIG). The SAM domain maps to 869–932 (FKGSDLPELF…LLAISELNKN (64 aa)).

It belongs to the BicC family.

Functionally, putative RNA-binding protein. May be involved in regulating gene expression during embryonic development. Seems to be involved in endoderm formation. Ectopic expression results in endoderm formation in the absence of mesoderm induction. The chain is Protein bicaudal C homolog 1-B (bicc1-b) from Xenopus laevis (African clawed frog).